Here is a 670-residue protein sequence, read N- to C-terminus: NADH-ubiquinone oxidoreductase chain 5 (670 aa).

19 helical membrane passes run 1–21, 31–51, 81–101, 111–131, 133–153, 178–198, 211–231, 251–271, 283–303, 311–331, 339–359, 375–395, 421–441, 462–482, 519–539, 566–586, 594–614, 629–649, and 650–670; these read MYIVNLILPLIGSIITGIFGH, IAVGCMMLTAISSLYIGYEIL, LTSIMIIVITCISSMVHLYSM, TRFFSYLSLFTFFMMLLVTAD, FVQLFFGWEGVGIMSYLLINF, LFFGILLVFLVFKSVDFSVIF, LLGYEVNAITLIGSFIVIGVV, TPVSALLHAATMVTAGVFLVL, ILNILTIIGALTTLFATTIGI, VIAYSTCSQLGYMIFACGLLN, LTTHAFFKALLFLSAGSVIHG, LMPLTYQCMLIGTLALTGFPF, AIIGYVAAFGTTFYSFRLLIL, TNMVIPLVILALCSIFIGYVT, LLPLFAFIYGVITPVLFYFNI, FDFLSRVLIVVPFFHLSYDVM, LWEKIGVTGVATTLVTAFTAL, IVQTIILIIVVGIFSFMTGFI, and YMELCIIIGILYICLPSIKID.

Belongs to the complex I subunit 5 family.

The protein localises to the mitochondrion inner membrane. It catalyses the reaction a ubiquinone + NADH + 5 H(+)(in) = a ubiquinol + NAD(+) + 4 H(+)(out). Its function is as follows. Core subunit of the mitochondrial membrane respiratory chain NADH dehydrogenase (Complex I) that is believed to belong to the minimal assembly required for catalysis. Complex I functions in the transfer of electrons from NADH to the respiratory chain. The immediate electron acceptor for the enzyme is believed to be ubiquinone. This chain is NADH-ubiquinone oxidoreductase chain 5 (nad5), found in Dictyostelium discoideum (Social amoeba).